A 236-amino-acid polypeptide reads, in one-letter code: Exosome complex component Rrp4 (236 aa).

The 70-residue stretch at 64-133 (GDKVIGKIIE…EIKESWLTLK (70 aa)) folds into the S1 motif domain. Residues 141-199 (EGGHMVLIHASRVPRVIGKGGGMVNMVKELTSTRIIIGQNGLIWIDGPIEGVTMAIAAI) enclose the KH domain.

Belongs to the RRP4 family. As to quaternary structure, component of the archaeal exosome complex. Forms a trimer of Rrp4 and/or Csl4 subunits. The trimer associates with a hexameric ring-like arrangement composed of 3 Rrp41-Rrp42 heterodimers.

Its subcellular location is the cytoplasm. Its function is as follows. Non-catalytic component of the exosome, which is a complex involved in RNA degradation. Increases the RNA binding and the efficiency of RNA degradation. Confers strong poly(A) specificity to the exosome. This Thermoplasma volcanium (strain ATCC 51530 / DSM 4299 / JCM 9571 / NBRC 15438 / GSS1) protein is Exosome complex component Rrp4.